Consider the following 378-residue polypeptide: Ribosomal RNA large subunit methyltransferase G (378 aa).

This sequence belongs to the methyltransferase superfamily. RlmG family.

The protein resides in the cytoplasm. It carries out the reaction guanosine(1835) in 23S rRNA + S-adenosyl-L-methionine = N(2)-methylguanosine(1835) in 23S rRNA + S-adenosyl-L-homocysteine + H(+). In terms of biological role, specifically methylates the guanine in position 1835 (m2G1835) of 23S rRNA. The sequence is that of Ribosomal RNA large subunit methyltransferase G from Shigella flexneri serotype 5b (strain 8401).